Reading from the N-terminus, the 188-residue chain is Phosphoribosylglycinamide formyltransferase (188 aa).

A N(1)-(5-phospho-beta-D-ribosyl)glycinamide-binding site is contributed by 12 to 14 (GSN). (6R)-10-formyltetrahydrofolate-binding positions include lysine 66, 91–94 (MRLV), and asparagine 108. Histidine 110 (proton donor) is an active-site residue.

Belongs to the GART family.

It carries out the reaction N(1)-(5-phospho-beta-D-ribosyl)glycinamide + (6R)-10-formyltetrahydrofolate = N(2)-formyl-N(1)-(5-phospho-beta-D-ribosyl)glycinamide + (6S)-5,6,7,8-tetrahydrofolate + H(+). Its pathway is purine metabolism; IMP biosynthesis via de novo pathway; N(2)-formyl-N(1)-(5-phospho-D-ribosyl)glycinamide from N(1)-(5-phospho-D-ribosyl)glycinamide (10-formyl THF route): step 1/1. Its function is as follows. Catalyzes the transfer of a formyl group from 10-formyltetrahydrofolate to 5-phospho-ribosyl-glycinamide (GAR), producing 5-phospho-ribosyl-N-formylglycinamide (FGAR) and tetrahydrofolate. In Staphylococcus epidermidis (strain ATCC 35984 / DSM 28319 / BCRC 17069 / CCUG 31568 / BM 3577 / RP62A), this protein is Phosphoribosylglycinamide formyltransferase.